Consider the following 484-residue polypeptide: MQPPSQDWASLLPAAWSEARQILRKKCGSRTFESWLKSLMLADFDSQKKIIRLACPSEFMANWISSHLSDELLLAWRTVWPGIAEVKVSVRNPESQPLLLDVTEIELPLGDQPRPLPKKPAKKKQSVPATPKSTSPEKKAEGEDQNQFEERYNFDNFVVGKANDLAYRAACTFAEGGKLDFNPLFLYGGTGLGKTHLMHAVGIEYLKRHPNSTALYMSAEKFMYDFVASMRAKDTHSFKARLRSADLLMIDDVQFIAGKDSTQEEFFHTMNEVITAGRRLVISADRSPQDLERIESRILSRLSWGLVADVNPADFELRLNIILKKLEAMPQVSMPEDIVFFLAKRICTNVRELEGALNRVVAYATLSNRPINMDFVTETLADLLRTTQQRVTVEDIQKRVCDHYHLKLADMSSKRRDRVIARPRQVAMYLSKQLTSRSLPEIGQRFGGRDHTTVIHAIRQIEKLRITDEDVDSDVRLLMRQFEG.

The tract at residues 1–83 is domain I, interacts with DnaA modulators; that stretch reads MQPPSQDWAS…LAWRTVWPGI (83 aa). Residues 83 to 146 form a domain II region; that stretch reads IAEVKVSVRN…EKKAEGEDQN (64 aa). The segment at 110 to 146 is disordered; sequence GDQPRPLPKKPAKKKQSVPATPKSTSPEKKAEGEDQN. Over residues 116–125 the composition is skewed to basic residues; that stretch reads LPKKPAKKKQ. Residues 135-146 are compositionally biased toward basic and acidic residues; sequence SPEKKAEGEDQN. A domain III, AAA+ region region spans residues 147–364; sequence QFEERYNFDN…GALNRVVAYA (218 aa). Residues glycine 191, glycine 193, lysine 194, and threonine 195 each coordinate ATP. Residues 365-484 form a domain IV, binds dsDNA region; sequence TLSNRPINMD…VRLLMRQFEG (120 aa).

Belongs to the DnaA family. In terms of assembly, oligomerizes as a right-handed, spiral filament on DNA at oriC.

The protein localises to the cytoplasm. In terms of biological role, plays an essential role in the initiation and regulation of chromosomal replication. ATP-DnaA binds to the origin of replication (oriC) to initiate formation of the DNA replication initiation complex once per cell cycle. Binds the DnaA box (a 9 base pair repeat at the origin) and separates the double-stranded (ds)DNA. Forms a right-handed helical filament on oriC DNA; dsDNA binds to the exterior of the filament while single-stranded (ss)DNA is stabiized in the filament's interior. The ATP-DnaA-oriC complex binds and stabilizes one strand of the AT-rich DNA unwinding element (DUE), permitting loading of DNA polymerase. After initiation quickly degrades to an ADP-DnaA complex that is not apt for DNA replication. Binds acidic phospholipids. The sequence is that of Chromosomal replication initiator protein DnaA from Zymomonas mobilis subsp. mobilis (strain ATCC 31821 / ZM4 / CP4).